A 629-amino-acid polypeptide reads, in one-letter code: DNA-directed RNA polymerase III subunit rpc3 (629 aa).

3 disordered regions span residues 136-164, 247-294, and 373-420; these read ANGVPEEHGEHEEDEEQSNGLNGEHSNEQ, PRGA…EMGY, and QLDL…SGGN. Basic and acidic residues predominate over residues 257–268; that stretch reads RRADEPNKKCRT. Residues 272 to 293 are compositionally biased toward acidic residues; that stretch reads SVDENDEHDEEEENEWSDDEMG. Polar residues predominate over residues 374–388; that stretch reads LDLSSSTGPMDSSQP. Over residues 389 to 409 the composition is skewed to basic and acidic residues; sequence DGRRGKRPWDGDVEGTNHEEA. A leucine-zipper region spans residues 556–577; the sequence is TYKAMSRCLQRLRFERSRIKDF.

It belongs to the RNA polymerase beta chain family. In terms of assembly, component of the RNA polymerase III (Pol III) complex consisting of 17 subunits.

It localises to the nucleus. DNA-dependent RNA polymerase catalyzes the transcription of DNA into RNA using the four ribonucleoside triphosphates as substrates. Specific core component of RNA polymerase III which synthesizes small RNAs, such as 5S rRNA and tRNAs. The sequence is that of DNA-directed RNA polymerase III subunit rpc3 (rpc82) from Aspergillus fumigatus (strain ATCC MYA-4609 / CBS 101355 / FGSC A1100 / Af293) (Neosartorya fumigata).